Reading from the N-terminus, the 285-residue chain is Putative sugar uptake protein lp_2503 (285 aa).

9 consecutive transmembrane segments (helical) span residues 2–21, 31–48, 55–72, 112–134, 147–169, 179–196, 209–228, 233–255, and 264–283; these read GILI…LISG, TLGM…LWAV, SKIW…SIGQ, GNMY…LTSL, NWGV…TIVV, VVMP…IWSF, NIVT…MAMA, AVAY…YLLG, and VYVV…LSLM.

This sequence belongs to the GRP transporter (TC 2.A.7.5) family.

Its subcellular location is the cell membrane. The chain is Putative sugar uptake protein lp_2503 from Lactiplantibacillus plantarum (strain ATCC BAA-793 / NCIMB 8826 / WCFS1) (Lactobacillus plantarum).